We begin with the raw amino-acid sequence, 518 residues long: U-box domain-containing protein 57 (518 aa).

Positions 86–142 (EEVRKVHILEEEIVTLKHQADTYLVQKEKAVTAYDQLKHERDNAVQQVNELRDQSTH) form a coiled coil. One can recognise a Protein kinase domain in the interval 159–409 (FKNAREVGDT…RPDLLNEVWI (251 aa)). Residues 434–508 (SVPAAFICPI…HGYLQQQQPN (75 aa)) enclose the U-box domain.

It carries out the reaction S-ubiquitinyl-[E2 ubiquitin-conjugating enzyme]-L-cysteine + [acceptor protein]-L-lysine = [E2 ubiquitin-conjugating enzyme]-L-cysteine + N(6)-ubiquitinyl-[acceptor protein]-L-lysine.. It participates in protein modification; protein ubiquitination. Functionally, possesses E3 ubiquitin-protein ligase in vitro. May be involved in cell death signaling. The polypeptide is U-box domain-containing protein 57 (PUB57) (Oryza sativa subsp. japonica (Rice)).